The following is an 87-amino-acid chain: MENDKGQLVELYIPRKCSATNRIIKADDHASVQINIAKVDEEGRAIPGEYITYALSGNVRARGESDDSLNRLAQNDGLLKNVWSYSR.

This sequence belongs to the eukaryotic ribosomal protein eS21 family. Component of the small ribosomal subunit. Mature ribosomes consist of a small (40S) and a large (60S) subunit. The 40S subunit contains about 33 different proteins and 1 molecule of RNA (18S). The 60S subunit contains about 49 different proteins and 3 molecules of RNA (25S, 5.8S and 5S).

The protein resides in the cytoplasm. Functionally, required for the processing of the 20S rRNA-precursor to mature 18S rRNA in a late step of the maturation of 40S ribosomal subunits. Has a physiological role leading to 18S rRNA stability. The sequence is that of Small ribosomal subunit protein eS21 (RPS21) from Candida glabrata (strain ATCC 2001 / BCRC 20586 / JCM 3761 / NBRC 0622 / NRRL Y-65 / CBS 138) (Yeast).